A 535-amino-acid chain; its full sequence is Major glycerophosphoinositol permease GIT3 (535 aa).

A helical transmembrane segment spans residues 49-69 (VVTSVKANSLWPAFASGAGLF). Residue Asn75 is glycosylated (N-linked (GlcNAc...) asparagine). 5 helical membrane-spanning segments follow: residues 101–121 (NIAS…GYIS), 137–157 (LIFF…QGFF), 165–185 (FFLG…ASEF), 204–224 (AMID…IWIF), and 232–252 (LWRV…FMRL). Asn256 carries an N-linked (GlcNAc...) asparagine glycan. Transmembrane regions (helical) follow at residues 275–295 (WWLI…IWFI), 324–344 (WGWS…GAIS), 352–372 (LTLA…SACL), 378–398 (HIAG…FGPG), 419–439 (GIAA…FPAI), and 455–475 (VPFY…IFFC). A glycan (N-linked (GlcNAc...) asparagine) is linked at Asn532.

It belongs to the major facilitator superfamily. Sugar transporter (TC 2.A.1.1) family.

The protein localises to the cell membrane. It carries out the reaction sn-glycerol 3-phosphocholine(out) = sn-glycerol 3-phosphocholine(in). In terms of biological role, glycerophosphodiester transporter that mediates uptake of glycerophosphocholine (GroPCho) with GIT4. GIT3 acts as the major GroPCho permease. Does not possess detectable glycerophosphoinositol (GroPIns) transport activity. The expanded ability to utilize GroPIns and GroPCho results from the organism's pathogenic nature and its need to occupy a variety of environments within its host organism. This possibility is buttressed by the fact that GroPIns and GroPCho are present and abundant in human fluids. This chain is Major glycerophosphoinositol permease GIT3, found in Candida albicans (strain SC5314 / ATCC MYA-2876) (Yeast).